We begin with the raw amino-acid sequence, 479 residues long: Adenosylhomocysteinase (479 aa).

Residues threonine 56, aspartate 134, and glutamate 200 each contribute to the substrate site. An NAD(+)-binding site is contributed by 201–203; it reads TTT. Lysine 230 and aspartate 234 together coordinate substrate. Residues asparagine 235, 264-269, glutamate 287, asparagine 322, 343-345, and asparagine 391 contribute to the NAD(+) site; these read GYGDVG and IGH.

This sequence belongs to the adenosylhomocysteinase family. Homotetramer. NAD(+) serves as cofactor.

It carries out the reaction S-adenosyl-L-homocysteine + H2O = L-homocysteine + adenosine. Its pathway is amino-acid biosynthesis; L-homocysteine biosynthesis; L-homocysteine from S-adenosyl-L-homocysteine: step 1/1. In terms of biological role, adenosylhomocysteine is a competitive inhibitor of S-adenosyl-L-methionine-dependent methyl transferase reactions; therefore adenosylhomocysteinase may play a key role in the control of methylations via regulation of the intracellular concentration of adenosylhomocysteine. The protein is Adenosylhomocysteinase of Plasmodium falciparum (isolate 3D7).